An 837-amino-acid chain; its full sequence is Protein translocase subunit SecA 1 (837 aa).

ATP contacts are provided by residues glutamine 85, 103–107 (GEGKT), and aspartate 492. The disordered stretch occupies residues 791-837 (KGEAINPAEGKPEAKRQPIRKDQHIGRNDPCPCGSGKKYKNCHGKEA). Residues 800-817 (GKPEAKRQPIRKDQHIGR) show a composition bias toward basic and acidic residues. Residues cysteine 821, cysteine 823, cysteine 832, and histidine 833 each contribute to the Zn(2+) site. Positions 827-837 (KKYKNCHGKEA) are enriched in basic residues.

The protein belongs to the SecA family. As to quaternary structure, monomer and homodimer. Part of the essential Sec protein translocation apparatus which comprises SecA, SecYEG and auxiliary proteins SecDF. Other proteins may also be involved. It depends on Zn(2+) as a cofactor.

It localises to the cell membrane. It is found in the cytoplasm. It carries out the reaction ATP + H2O + cellular proteinSide 1 = ADP + phosphate + cellular proteinSide 2.. Part of the Sec protein translocase complex. Interacts with the SecYEG preprotein conducting channel. Has a central role in coupling the hydrolysis of ATP to the transfer of proteins into and across the cell membrane, serving as an ATP-driven molecular motor driving the stepwise translocation of polypeptide chains across the membrane. In Listeria monocytogenes serovar 1/2a (strain ATCC BAA-679 / EGD-e), this protein is Protein translocase subunit SecA 1.